We begin with the raw amino-acid sequence, 172 residues long: Adenine phosphoribosyltransferase (172 aa).

It belongs to the purine/pyrimidine phosphoribosyltransferase family. In terms of assembly, homodimer.

It localises to the cytoplasm. It carries out the reaction AMP + diphosphate = 5-phospho-alpha-D-ribose 1-diphosphate + adenine. It participates in purine metabolism; AMP biosynthesis via salvage pathway; AMP from adenine: step 1/1. Its function is as follows. Catalyzes a salvage reaction resulting in the formation of AMP, that is energically less costly than de novo synthesis. In Methanococcus maripaludis (strain DSM 14266 / JCM 13030 / NBRC 101832 / S2 / LL), this protein is Adenine phosphoribosyltransferase.